A 185-amino-acid chain; its full sequence is Large ribosomal subunit protein uL5 (185 aa).

This sequence belongs to the universal ribosomal protein uL5 family. As to quaternary structure, part of the 50S ribosomal subunit; part of the 5S rRNA/L5/L18/L25 subcomplex. Contacts the 5S rRNA and the P site tRNA. Forms a bridge to the 30S subunit in the 70S ribosome.

Its function is as follows. This is one of the proteins that bind and probably mediate the attachment of the 5S RNA into the large ribosomal subunit, where it forms part of the central protuberance. In the 70S ribosome it contacts protein S13 of the 30S subunit (bridge B1b), connecting the 2 subunits; this bridge is implicated in subunit movement. Contacts the P site tRNA; the 5S rRNA and some of its associated proteins might help stabilize positioning of ribosome-bound tRNAs. This Chelativorans sp. (strain BNC1) protein is Large ribosomal subunit protein uL5.